The following is a 339-amino-acid chain: Fructose-1,6-bisphosphatase class 1 (339 aa).

4 residues coordinate Mg(2+): Glu-91, Asp-113, Leu-115, and Asp-116. Residues Asp-116–Ser-119, Asn-208, and Lys-274 contribute to the substrate site. Glu-280 lines the Mg(2+) pocket.

It belongs to the FBPase class 1 family. As to quaternary structure, homotetramer. It depends on Mg(2+) as a cofactor.

Its subcellular location is the cytoplasm. It catalyses the reaction beta-D-fructose 1,6-bisphosphate + H2O = beta-D-fructose 6-phosphate + phosphate. The protein operates within carbohydrate biosynthesis; gluconeogenesis. This chain is Fructose-1,6-bisphosphatase class 1, found in Cupriavidus pinatubonensis (strain JMP 134 / LMG 1197) (Cupriavidus necator (strain JMP 134)).